The following is a 635-amino-acid chain: Beta-mannosyltransferase 2 (635 aa).

Residues 1-6 are Cytoplasmic-facing; it reads MRTRLN. The helical transmembrane segment at 7–27 threads the bilayer; the sequence is FLLLCIASVLSVIWIGVLLTW. The Extracellular portion of the chain corresponds to 28 to 635; that stretch reads NDNNLGGISL…EKKEAEKKGK (608 aa). Asn484 carries N-linked (GlcNAc...) asparagine glycosylation. Residues 512 to 635 adopt a coiled-coil conformation; it reads TRGEAERRRR…EKKEAEKKGK (124 aa). Residues 517–635 form a disordered region; the sequence is ERRRRVAEER…EKKEAEKKGK (119 aa).

This sequence belongs to the BMT family.

It localises to the membrane. Functionally, beta-mannosyltransferase involved in cell wall biosynthesis. Initiates the beta-mannosylation of core N-linked glycans. This chain is Beta-mannosyltransferase 2 (BMT2), found in Komagataella phaffii (strain ATCC 76273 / CBS 7435 / CECT 11047 / NRRL Y-11430 / Wegner 21-1) (Yeast).